A 117-amino-acid polypeptide reads, in one-letter code: Protein OPG035 (117 aa).

It belongs to the poxviridae OPG035 family.

Bcl-2-like protein which contributes to virulence by preventing host NF-kappa-B activation in response to pro-inflammatory stimuli such as TNF-alpha or IL1B. The polypeptide is Protein OPG035 (OPG035) (Bos taurus (Bovine)).